The chain runs to 626 residues: NAD-dependent malic enzyme, mitochondrial (626 aa).

The transit peptide at 1–34 (MAIFSNQMRLSSTLLKRLHQRVAAAVNSSSSRNF) directs the protein to the mitochondrion. Residues R91 and R125 each contribute to the fumarate site. Y146 functions as the Proton donor in the catalytic mechanism. R199 lines the (S)-malate pocket. R199 contacts NAD(+). Catalysis depends on K217, which acts as the Proton acceptor. Residues E288, D289, and D312 each coordinate a divalent metal cation. A348 and A351 together coordinate NAD(+). (S)-malate-binding residues include N467 and N512.

It belongs to the malic enzymes family. Heterodimer of two related subunits. It depends on Mg(2+) as a cofactor. The cofactor is Mn(2+).

It is found in the mitochondrion matrix. It catalyses the reaction (S)-malate + NAD(+) = pyruvate + CO2 + NADH. In Solanum tuberosum (Potato), this protein is NAD-dependent malic enzyme, mitochondrial.